Reading from the N-terminus, the 233-residue chain is Small ribosomal subunit protein uS5 (233 aa).

Basic and acidic residues-rich tracts occupy residues 1 to 12 (MANESEIQKTEN) and 39 to 54 (RGRD…RNEE). Residues 1-54 (MANESEIQKTENAEVANAANGTNPNNERRGRGGRGRGGRGRDGRGRRDDRRNEE) are disordered. One can recognise an S5 DRBM domain in the interval 59–122 (LIEKLVHINR…AAAKKTMIRV (64 aa)).

It belongs to the universal ribosomal protein uS5 family. Part of the 30S ribosomal subunit. Contacts proteins S4 and S8.

With S4 and S12 plays an important role in translational accuracy. In terms of biological role, located at the back of the 30S subunit body where it stabilizes the conformation of the head with respect to the body. This is Small ribosomal subunit protein uS5 from Zymomonas mobilis subsp. mobilis (strain ATCC 31821 / ZM4 / CP4).